We begin with the raw amino-acid sequence, 206 residues long: GTP-binding protein Rho3 (206 aa).

Position 24 to 31 (24 to 31 (GDGACGKT)) interacts with GTP. The Effector region motif lies at 46–54 (YEPTVFENY). Residues 71–75 (DTAGQ) and 129–132 (SKCD) each bind GTP. A Cysteine methyl ester modification is found at Cys-203. The S-geranylgeranyl cysteine moiety is linked to residue Cys-203. Residues 204 to 206 (CVM) constitute a propeptide, removed in mature form.

This sequence belongs to the small GTPase superfamily. Rho family.

Its subcellular location is the cell membrane. The sequence is that of GTP-binding protein Rho3 (RHO3) from Schizophyllum commune (Split gill fungus).